Here is an 812-residue protein sequence, read N- to C-terminus: Ribonucleoside-diphosphate reductase large subunit (812 aa).

In terms of domain architecture, ATP-cone spans 12-103; that stretch reads LYVIKRDGRQ…VSNLHKETKK (92 aa). Residues 16–17, 22–28, T64, and D68 each bind ATP; these read KR and EEVHFDK. The GDP site is built by S213 and S228. A disulfide bridge connects residues C229 and C455. DTTP is bound by residues 237 to 239, K254, R267, and 274 to 275; these read DSI and CG. Residue N438 participates in GDP binding. The active-site Proton acceptor is the N438. The Cysteine radical intermediate role is filled by C440. GDP contacts are provided by residues E442 and 615-618; that span reads TAST. Catalysis depends on E442, which acts as the Proton acceptor. T778 carries the phosphothreonine modification. At S782 the chain carries Phosphoserine. At Y786 the chain carries Phosphotyrosine.

Belongs to the ribonucleoside diphosphate reductase large chain family. In terms of assembly, heterodimer of a large and a small subunit.

It carries out the reaction a 2'-deoxyribonucleoside 5'-diphosphate + [thioredoxin]-disulfide + H2O = a ribonucleoside 5'-diphosphate + [thioredoxin]-dithiol. With respect to regulation, under complex allosteric control mediated by deoxynucleoside triphosphates and ATP binding to separate specificity and activation sites on the M1 subunit. The type of nucleotide bound at the specificity site determines substrate preference. It seems probable that ATP makes the enzyme reduce CDP and UDP, dGTP favors ADP reduction and dTTP favors GDP reduction. Stimulated by ATP and inhibited by dATP binding to the activity site. Provides the precursors necessary for DNA synthesis. Catalyzes the biosynthesis of deoxyribonucleotides from the corresponding ribonucleotides. The protein is Ribonucleoside-diphosphate reductase large subunit (RnrL) of Drosophila melanogaster (Fruit fly).